We begin with the raw amino-acid sequence, 295 residues long: Perivine-Nbeta-methyltransferase (295 aa).

Residues 76–85 (ILDVGCGKGG) are SAM motif I. The short motif at 138-144 (DGSFELI) is the Vacuolar targeting signal element. An SAM motif II region spans residues 139-147 (GSFELIFVI). The tract at residues 166-175 (VAAPGAQIVI) is SAM motif III.

Belongs to the class I-like SAM-binding methyltransferase superfamily. gTMT family. In terms of assembly, homodimer. In terms of tissue distribution, mainly expressed in young leaves, and, to a lower extent, in mature leaves, flowers, stems and roots (at protein level). Transcripts levels are highest in flowers, moderate in leaves and low in roots and stems.

It is found in the vacuole membrane. It catalyses the reaction perivine + S-adenosyl-L-methionine = vobasine + S-adenosyl-L-homocysteine + 2 H(+). The protein operates within alkaloid biosynthesis; vindoline biosynthesis. In terms of biological role, S-adenosyl-L-methionine-dependent N-methyltransferase involved in the biosynthesis of biologically active monoterpenoid indole alkaloids (MIAs) natural products including vindoline. Catalyzes the conversion of perivine to Nbeta-methylperivine (vobasine) by methylating its N4 nitrogen. Inactive with picrinine as substrate. The sequence is that of Perivine-Nbeta-methyltransferase from Catharanthus roseus (Madagascar periwinkle).